The sequence spans 155 residues: Small ribosomal subunit protein uS7cz/uS7cy (155 aa).

It belongs to the universal ribosomal protein uS7 family. Part of the 30S ribosomal subunit.

Its subcellular location is the plastid. It localises to the chloroplast. In terms of biological role, one of the primary rRNA binding proteins, it binds directly to 16S rRNA where it nucleates assembly of the head domain of the 30S subunit. The chain is Small ribosomal subunit protein uS7cz/uS7cy (rps7-A) from Oenothera argillicola (Appalachian evening primrose).